We begin with the raw amino-acid sequence, 88 residues long: Small ribosomal subunit protein uS15 (88 aa).

It belongs to the universal ribosomal protein uS15 family. Part of the 30S ribosomal subunit. Forms a bridge to the 50S subunit in the 70S ribosome, contacting the 23S rRNA.

One of the primary rRNA binding proteins, it binds directly to 16S rRNA where it helps nucleate assembly of the platform of the 30S subunit by binding and bridging several RNA helices of the 16S rRNA. In terms of biological role, forms an intersubunit bridge (bridge B4) with the 23S rRNA of the 50S subunit in the ribosome. The polypeptide is Small ribosomal subunit protein uS15 (Geobacter metallireducens (strain ATCC 53774 / DSM 7210 / GS-15)).